Consider the following 280-residue polypeptide: Fructose-1,6-bisphosphatase class 1 (280 aa).

Positions 64, 83, 85, and 86 each coordinate Mg(2+). Substrate-binding positions include 86–89, tyrosine 189, and lysine 220; that span reads DGSS. Position 226 (glutamate 226) interacts with Mg(2+).

It belongs to the FBPase class 1 family. Homotetramer. The cofactor is Mg(2+).

It localises to the cytoplasm. It carries out the reaction beta-D-fructose 1,6-bisphosphate + H2O = beta-D-fructose 6-phosphate + phosphate. Its pathway is carbohydrate biosynthesis; gluconeogenesis. The sequence is that of Fructose-1,6-bisphosphatase class 1 from Campylobacter jejuni subsp. jejuni serotype O:6 (strain 81116 / NCTC 11828).